The chain runs to 159 residues: Vasotocin-neurophysin VT (159 aa).

Positions 1 to 17 (TAPVPACFLCLLALSSA) are cleaved as a signal peptide. An intrachain disulfide couples cysteine 18 to cysteine 23. Residue glycine 26 is modified to Glycine amide. Intrachain disulfides connect cysteine 39-cysteine 83, cysteine 42-cysteine 56, cysteine 50-cysteine 73, cysteine 57-cysteine 63, cysteine 90-cysteine 102, cysteine 96-cysteine 114, and cysteine 103-cysteine 108. A glycan (N-linked (GlcNAc...) asparagine) is linked at asparagine 129.

It belongs to the vasopressin/oxytocin family. In terms of processing, seven disulfide bonds are present in neurophysin.

The protein resides in the secreted. Its function is as follows. Vasotocin is an antidiuretic hormone. This Bufo japonicus (Japanese common toad) protein is Vasotocin-neurophysin VT.